The sequence spans 469 residues: Arginine biosynthesis bifunctional protein ArgJ, mitochondrial (469 aa).

Positions 199, 228, 239, 325, 464, and 469 each coordinate substrate. The active-site Nucleophile is T239.

The protein belongs to the ArgJ family. In terms of assembly, heterodimer of an alpha and a beta chain. Post-translationally, the alpha and beta chains are autoproteolytically processed from a single precursor protein within the mitochondrion.

It is found in the mitochondrion matrix. The enzyme catalyses N(2)-acetyl-L-ornithine + L-glutamate = N-acetyl-L-glutamate + L-ornithine. It catalyses the reaction L-glutamate + acetyl-CoA = N-acetyl-L-glutamate + CoA + H(+). Its pathway is amino-acid biosynthesis; L-arginine biosynthesis; L-ornithine and N-acetyl-L-glutamate from L-glutamate and N(2)-acetyl-L-ornithine (cyclic): step 1/1. It participates in amino-acid biosynthesis; L-arginine biosynthesis; N(2)-acetyl-L-ornithine from L-glutamate: step 1/4. Its function is as follows. Catalyzes two activities which are involved in the cyclic version of arginine biosynthesis: the synthesis of acetylglutamate from glutamate and acetyl-CoA, and of ornithine by transacetylation between acetylornithine and glutamate. This chain is Arginine biosynthesis bifunctional protein ArgJ, mitochondrial, found in Neurospora crassa (strain ATCC 24698 / 74-OR23-1A / CBS 708.71 / DSM 1257 / FGSC 987).